The sequence spans 124 residues: Meiotically up-regulated gene 103 protein (124 aa).

Its subcellular location is the nucleus. The protein localises to the nucleolus. Its function is as follows. Has a role in meiosis. The protein is Meiotically up-regulated gene 103 protein (mug103) of Schizosaccharomyces pombe (strain 972 / ATCC 24843) (Fission yeast).